Here is a 556-residue protein sequence, read N- to C-terminus: Zinc finger protein 18 (556 aa).

An SCAN box domain is found at 41 to 123 (RQLFRQFRYQ…TLVESLKGDP (83 aa)). Residues 169 to 195 (QDLPLQNTSSAPGELLSHGVKEESDLE) are disordered. The KRAB domain occupies 218–291 (EVGTALLPSL…HLHSAEKMAR (74 aa)). C2H2-type zinc fingers lie at residues 415–437 (PTCRECGKTFYRNSQLVFHQRTH), 443–465 (FHCRICKKAFLRSSDFVKHQRTH), 471–493 (CKCDYCGKGFSDFSGLRHHEKIH), 499–521 (YKCPICEKSFIQRSNFNRHQRVH), and 527–549 (YKCTHCGKRFSWSSSLDKHQRSH).

The protein belongs to the krueppel C2H2-type zinc-finger protein family.

The protein resides in the nucleus. May be involved in transcriptional regulation. This is Zinc finger protein 18 (Znf18) from Rattus norvegicus (Rat).